A 301-amino-acid polypeptide reads, in one-letter code: Nucleotide-binding protein Rfer_1653 (301 aa).

15–22 (GMSGSGKS) contributes to the ATP binding site. 64–67 (DVRT) contacts GTP.

This sequence belongs to the RapZ-like family.

Its function is as follows. Displays ATPase and GTPase activities. The protein is Nucleotide-binding protein Rfer_1653 of Albidiferax ferrireducens (strain ATCC BAA-621 / DSM 15236 / T118) (Rhodoferax ferrireducens).